We begin with the raw amino-acid sequence, 315 residues long: MSESLRIIFAGTPDFAARHLDALLSSGHNIVGVFTQPDRPAGRGKKLMPSPVKVQAEDKGLPVFQPVSLRPQENQQLVADLQADVMVVVAYGLILPKAVLEMPRLGCINVHGSLLPRWRGAAPIQRSLWAGDAETGVTIMQMDVGLDTGDMLYKLSCPITAEDTSGTLYDKLAELGPQGLITTLKQLADGTAKPEVQDETLVTYAEKLSKEEARIDWSLSAAQLERCIRAFNPWPMSWLEIEGQPVKVWKASVIDTTTKAAPGTILEANKQGIQVATGDGILNLLSMQPAGKKAMSVQDLLNSRREWFVPGNRLA.

113–116 is a binding site for (6S)-5,6,7,8-tetrahydrofolate; it reads SLLP.

This sequence belongs to the Fmt family.

It carries out the reaction L-methionyl-tRNA(fMet) + (6R)-10-formyltetrahydrofolate = N-formyl-L-methionyl-tRNA(fMet) + (6S)-5,6,7,8-tetrahydrofolate + H(+). Attaches a formyl group to the free amino group of methionyl-tRNA(fMet). The formyl group appears to play a dual role in the initiator identity of N-formylmethionyl-tRNA by promoting its recognition by IF2 and preventing the misappropriation of this tRNA by the elongation apparatus. The sequence is that of Methionyl-tRNA formyltransferase from Escherichia coli O6:K15:H31 (strain 536 / UPEC).